A 78-amino-acid polypeptide reads, in one-letter code: UPF0335 protein A1C_00850 (78 aa).

Belongs to the UPF0335 family.

This Rickettsia akari (strain Hartford) protein is UPF0335 protein A1C_00850.